The chain runs to 1230 residues: Formin-like protein 14 (1230 aa).

The 194-residue stretch at 1-194 folds into the Phosphatase tensin-type domain; it reads MSLLSRFFYK…QYVARRNINS (194 aa). The Phosphocysteine intermediate role is filled by Cys-127. The region spanning 200–339 is the C2 tensin-type domain; the sequence is ERALSLDCVI…FRAEVLFGEV (140 aa). 3 disordered regions span residues 412 to 432, 460 to 822, and 1187 to 1230; these read FNSPDSEEETNTSSAADSSDE, HESS…LKPL, and ENEK…RHRT. Positions 484–496 are enriched in low complexity; it reads DNPLNLPSDPPSS. 4 stretches are compositionally biased toward pro residues: residues 503–514, 524–535, 545–556, and 566–575; these read LPPPPPPPPPPL, SQPPPPPPPPPL, and SQPPPPPPLP. Positions 579–591 are enriched in polar residues; it reads NRDPLTTLHQPIN. 7 stretches are compositionally biased toward pro residues: residues 592–630, 637–649, 660–672, 679–688, 699–711, 718–728, and 735–766; these read KTPPPPPPPPPPLPSRSIPPPLAQPPPPRPPPPPPPPPS, PSAPPPPPPPPPS, QPPPPPPPPPPTR, APPPPPPPPT, PSTPPPPPPPPPK, PKPPAPPPLPP, and APPPPPPPPLSKTPAPPPPPLSKTPVPPPPPG. An FH2 domain is found at 809–1207; it reads VPTAAPKKTA…KLEKEAIKEK (399 aa). The segment covering 1187–1215 has biased composition (basic and acidic residues); sequence ENEKQAEAEKKKLEKEAIKEKSATKKDGV.

Belongs to the formin-like family. Class-II subfamily.

The chain is Formin-like protein 14 (FH14) from Arabidopsis thaliana (Mouse-ear cress).